The following is a 384-amino-acid chain: V-type proton ATPase subunit C (384 aa).

This sequence belongs to the V-ATPase C subunit family. V-ATPase is a heteromultimeric enzyme made up of two complexes: the ATP-hydrolytic V1 complex and the proton translocation V0 complex. The V1 complex consists of three catalytic AB heterodimers that form a heterohexamer, three peripheral stalks each consisting of EG heterodimers, one central rotor including subunits D and F, and the regulatory subunits C and H. The proton translocation complex V0 consists of the proton transport subunit a, a ring of proteolipid subunits c9c'', rotary subunit d, subunits e and f, and the accessory subunits vah-19/Ac45 and vah-20/PRR. Interacts with V-type proton ATPase subunits a1 unc-32, a2 vha-5 and a3 vha-6. In terms of tissue distribution, expressed ubiquitously; higher levels are found in gastrointestinal and hypodermal cells, as well as H-shaped excretory cell.

Its subcellular location is the cytoplasm. It is found in the membrane. In terms of biological role, subunit of the V1 complex of vacuolar(H+)-ATPase (V-ATPase), a multisubunit enzyme composed of a peripheral complex (V1) that hydrolyzes ATP and a membrane integral complex (V0) that translocates protons. V-ATPase is responsible for acidifying and maintaining the pH of intracellular compartments and in some cell types, is targeted to the plasma membrane, where it is responsible for acidifying the extracellular environment. Subunit C is necessary for the assembly of the catalytic sector of the enzyme and is likely to have a specific function in its catalytic activity. Has roles in embryogenesis and ovulation. This Caenorhabditis elegans protein is V-type proton ATPase subunit C.